Consider the following 516-residue polypeptide: Amino-acid permease BAT1 (516 aa).

Helical transmembrane passes span 33-53 (LSVF…TGIT), 70-90 (YGWF…AEIC), 113-133 (PLAS…VTAS), 164-184 (VVIG…SLPI), 189-209 (FIGQ…MILI), 232-252 (LGIT…QYTI), 275-295 (GIIS…LGIS), 328-348 (FGSG…VFFC), 383-403 (VPIN…LTSL), 406-426 (IVAF…AYAI), 452-472 (VVGW…SLPV), and 483-503 (YTPV…LFSA).

This sequence belongs to the amino acid-polyamine-organocation (APC) superfamily. Amino acid/choline transporter (ACT) (TC 2.A.3.4) family. Expressed in roots, rosette leaves, stems, cauline leaves, flowers and siliques.

It localises to the mitochondrion membrane. Functionally, may play a role in primary carbon metabolism and plant growth, by mediating the transport of GABA from the cytosol to mitochondria. When expressed in a heterologous system (yeast), imports Arg and Ala across the plasma membrane and exports Lys and Glu, but does not transport proline. This Arabidopsis thaliana (Mouse-ear cress) protein is Amino-acid permease BAT1 (BAT1).